Consider the following 128-residue polypeptide: U24-ctenitoxin-Pn1a (128 aa).

Thyroglobulin type-1 domains follow at residues 4-67 and 72-127; these read KSDC…ECGC and KERK…SLKC. 4 disulfides stabilise this stretch: Cys7–Cys27, Cys38–Cys45, Cys47–Cys67, and Cys107–Cys127.

Expressed by the venom gland.

The protein localises to the secreted. Functionally, cysteine proteinase inhibitor. The chain is U24-ctenitoxin-Pn1a from Phoneutria nigriventer (Brazilian armed spider).